Consider the following 148-residue polypeptide: Lysozyme C (148 aa).

The first 18 residues, 1 to 18 (MKALLLLGLLLLSVTVQG), serve as a signal peptide directing secretion. The C-type lysozyme domain maps to 19 to 148 (KIFERCDLAR…VSQYVRNCGV (130 aa)). 4 disulfides stabilise this stretch: C24-C146, C48-C134, C83-C99, and C95-C113. Active-site residues include E53 and D71.

This sequence belongs to the glycosyl hydrolase 22 family. In terms of assembly, monomer.

The enzyme catalyses Hydrolysis of (1-&gt;4)-beta-linkages between N-acetylmuramic acid and N-acetyl-D-glucosamine residues in a peptidoglycan and between N-acetyl-D-glucosamine residues in chitodextrins.. Functionally, lysozymes have primarily a bacteriolytic function; those in tissues and body fluids are associated with the monocyte-macrophage system and enhance the activity of immunoagents. The protein is Lysozyme C (LYZ) of Halichoerus grypus (Gray seal).